Reading from the N-terminus, the 217-residue chain is Histone H1-gamma, late (217 aa).

Disordered regions lie at residues 1-21 and 80-217; these read MSAA…HPPS and GKGA…PAKK. The region spanning 17–91 is the H15 domain; it reads AHPPSSQMVV…GASGSFKLGK (75 aa). Residues 104-113 are compositionally biased toward basic residues; it reads IAAKKAKLAA. The segment covering 114–123 has biased composition (basic and acidic residues); the sequence is KKKEQREKKA. Residues 124 to 217 are compositionally biased toward basic residues; it reads LKTKARKEKV…AKKAAKPAKK (94 aa).

This sequence belongs to the histone H1/H5 family.

The protein resides in the nucleus. It localises to the chromosome. Histones H1 are necessary for the condensation of nucleosome chains into higher-order structures. The protein is Histone H1-gamma, late of Strongylocentrotus purpuratus (Purple sea urchin).